Here is a 281-residue protein sequence, read N- to C-terminus: Glutamate racemase (281 aa).

Residues 10–11 and 42–43 each bind substrate; these read DS and YG. The active-site Proton donor/acceptor is Cys74. Residue 75 to 76 coordinates substrate; it reads NT. The Proton donor/acceptor role is filled by Cys190. A substrate-binding site is contributed by 191–192; sequence TH.

The protein belongs to the aspartate/glutamate racemases family.

It carries out the reaction L-glutamate = D-glutamate. The protein operates within cell wall biogenesis; peptidoglycan biosynthesis. Its function is as follows. Provides the (R)-glutamate required for cell wall biosynthesis. This is Glutamate racemase from Oenococcus oeni (strain ATCC BAA-331 / PSU-1).